We begin with the raw amino-acid sequence, 294 residues long: MTKIVVIAGPTASGKSDLAISVAQRFNGEIVSADAMQIYRGLDIGTAKVTKAERELVPHHLIDIVDMTDKFSVAEFVTRADQVINDIAKRGKLPVIAGGTGFYVKALLGQQPLDFVASDEAEVALLKQKSLPTLVTMLKAADTILASRVDLNNKQRVIRAIQIARHGKRQEDISRPTYDALIVGIDWPREILYERINRRAQKMLDDGLLSEVEHIMSVGGESIQAGKAIGYKEFFPYIRGEVTREQALLAVQQDSRRYAKRQLTYLRHQIPGLIWLHGTDAATKLTSEVKAWLD.

9–16 (GPTASGKS) is a binding site for ATP. Residue 11 to 16 (TASGKS) coordinates substrate. Positions 155–159 (QRVIR) are interaction with substrate tRNA.

The protein belongs to the IPP transferase family. In terms of assembly, monomer. Requires Mg(2+) as cofactor.

The catalysed reaction is adenosine(37) in tRNA + dimethylallyl diphosphate = N(6)-dimethylallyladenosine(37) in tRNA + diphosphate. In terms of biological role, catalyzes the transfer of a dimethylallyl group onto the adenine at position 37 in tRNAs that read codons beginning with uridine, leading to the formation of N6-(dimethylallyl)adenosine (i(6)A). This is tRNA dimethylallyltransferase from Leuconostoc citreum (strain KM20).